Consider the following 327-residue polypeptide: MIQTMSDTTEPTRHVSVLPVETLAALDPRAGGRYLDGTLGMGGHASAILSSAPGIELCGLDRDEEALALAGQRLSSFGGRAHLFHCRYSDFAEALNELGWDKVDGALLDIGVSSLQLDEAERGFSFYGDGPLDMRMDQNSAQPSAWHWVNRESFDKLKDCIATLGEEPQAGRIARAIVDARQKNTIDTTGQLAALVERAYPAAWRAKARRHPATRTFQALRMAVNDELGELRRFLDQILTWLPIGGRLAVITFHSLEDRMVKQAMRHWVEGCRCPRHIPRCICGHQPEVRILHKKPVQAGPEELAANSRAGSAKLRAVEKIAEDSGS.

S-adenosyl-L-methionine-binding positions include 42 to 44 (GGH), Asp-61, Leu-95, Asp-109, and Gln-116.

This sequence belongs to the methyltransferase superfamily. RsmH family.

Its subcellular location is the cytoplasm. The catalysed reaction is cytidine(1402) in 16S rRNA + S-adenosyl-L-methionine = N(4)-methylcytidine(1402) in 16S rRNA + S-adenosyl-L-homocysteine + H(+). Specifically methylates the N4 position of cytidine in position 1402 (C1402) of 16S rRNA. The polypeptide is Ribosomal RNA small subunit methyltransferase H (Desulfovibrio desulfuricans (strain ATCC 27774 / DSM 6949 / MB)).